Reading from the N-terminus, the 25-residue chain is Small ribosomal subunit protein eS32 (25 aa).

The disordered stretch occupies residues 1–25 (MRAKWRKKRMRRLKRKRRKMRQRSK).

This sequence belongs to the eukaryotic ribosomal protein eS32 family. Component of the large ribosomal subunit.

Its subcellular location is the cytoplasm. Its function is as follows. Component of the small ribosomal subunit. The ribosome is a large ribonucleoprotein complex responsible for the synthesis of proteins in the cell. The protein is Small ribosomal subunit protein eS32 (rpl41) of Cyprinus carpio (Common carp).